A 536-amino-acid polypeptide reads, in one-letter code: Nuclear hormone receptor family member nhr-7 (536 aa).

Positions N6 to P82 form a DNA-binding region, nuclear receptor. 2 NR C4-type zinc fingers span residues C9–C29 and C46–C70. The region spanning A155–I378 is the NR LBD domain. Residues S427–R465 are disordered. Residues Q439 to R465 are compositionally biased toward polar residues.

Belongs to the nuclear hormone receptor family.

It is found in the nucleus. Orphan nuclear receptor. This chain is Nuclear hormone receptor family member nhr-7 (nhr-7), found in Caenorhabditis elegans.